Consider the following 484-residue polypeptide: 3-isopropylmalate dehydratase large subunit (484 aa).

[4Fe-4S] cluster contacts are provided by Cys352, Cys412, and Cys415. The tract at residues 463 to 484 (TLSSPSDLDPAPASAAIRTDAA) is disordered. Low complexity predominate over residues 464–478 (LSSPSDLDPAPASAA).

The protein belongs to the aconitase/IPM isomerase family. LeuC type 1 subfamily. In terms of assembly, heterodimer of LeuC and LeuD. [4Fe-4S] cluster is required as a cofactor.

It catalyses the reaction (2R,3S)-3-isopropylmalate = (2S)-2-isopropylmalate. Its pathway is amino-acid biosynthesis; L-leucine biosynthesis; L-leucine from 3-methyl-2-oxobutanoate: step 2/4. Its function is as follows. Catalyzes the isomerization between 2-isopropylmalate and 3-isopropylmalate, via the formation of 2-isopropylmaleate. The protein is 3-isopropylmalate dehydratase large subunit of Pseudarthrobacter chlorophenolicus (strain ATCC 700700 / DSM 12829 / CIP 107037 / JCM 12360 / KCTC 9906 / NCIMB 13794 / A6) (Arthrobacter chlorophenolicus).